The primary structure comprises 61 residues: Metallothionein-1D (61 aa).

Residues 1–29 (MDPNCSCSTGGSCSCATSCTCKACRCTSC) are beta. The a divalent metal cation site is built by Cys5, Cys7, Cys13, Cys15, Cys19, Cys21, Cys24, Cys26, Cys29, Cys33, Cys34, Cys36, Cys37, Cys41, Cys44, Cys48, Cys50, Cys57, Cys59, and Cys60. Residues 30-61 (KKSCCSCCPAGCAKCAQGCICKGASDKCSCCA) form an alpha region.

It belongs to the metallothionein superfamily. Type 1 family. As to quaternary structure, monomer.

Its function is as follows. Metallothioneins have a high content of cysteine residues that bind various heavy metals; these proteins are transcriptionally regulated by both heavy metals and glucocorticoids. The polypeptide is Metallothionein-1D (MT1D) (Sus scrofa (Pig)).